Reading from the N-terminus, the 382-residue chain is FK506-binding protein 4 (382 aa).

Positions 139–274 (GLEVDEEIES…KEEPKKKITK (136 aa)) are disordered. The span at 141 to 173 (EVDEEIESDEEVESDEEIESDEEIESEEEEEEP) shows a compositional bias: acidic residues. Basic and acidic residues-rich tracts occupy residues 180-190 (RPAEEVKEIAS) and 196-270 (EKKE…EPKK). In terms of domain architecture, PPIase FKBP-type spans 295-382 (GQRVGMRYIG…VFDVKLLSMK (88 aa)).

It belongs to the FKBP-type PPIase family. FKBP3/4 subfamily. In terms of assembly, binds to histones H3 and H4.

It localises to the nucleus. It carries out the reaction [protein]-peptidylproline (omega=180) = [protein]-peptidylproline (omega=0). With respect to regulation, inhibited by both FK506 and rapamycin. Functionally, PPIase that acts as a histone chaperone. Histone proline isomerase that increases the rate of cis-trans isomerization at prolines on the histone H3 N-terminal tail. Proline isomerization influences H3 methylation thereby regulating gene expression. The protein is FK506-binding protein 4 (FKBP4) of Rhizopus delemar (strain RA 99-880 / ATCC MYA-4621 / FGSC 9543 / NRRL 43880) (Mucormycosis agent).